The following is a 597-amino-acid chain: 2-isopropylmalate synthase (597 aa).

The tract at residues Met-1–Glu-80 is unknown. One can recognise a Pyruvate carboxyltransferase domain in the interval Val-87–Val-349. The 2-isopropylmalate synthase stretch occupies residues Val-87–Val-349. Residues Asp-96, His-284, His-286, and Asn-320 each contribute to the Mn(2+) site. Residues Lys-475 to Ile-597 are regulatory domain.

Belongs to the alpha-IPM synthase/homocitrate synthase family. LeuA type 1 subfamily. As to quaternary structure, homodimer. It depends on Mn(2+) as a cofactor.

It is found in the cytoplasm. It catalyses the reaction 3-methyl-2-oxobutanoate + acetyl-CoA + H2O = (2S)-2-isopropylmalate + CoA + H(+). Its pathway is amino-acid biosynthesis; L-leucine biosynthesis; L-leucine from 3-methyl-2-oxobutanoate: step 1/4. Functionally, catalyzes the condensation of the acetyl group of acetyl-CoA with 3-methyl-2-oxobutanoate (2-ketoisovalerate) to form 3-carboxy-3-hydroxy-4-methylpentanoate (2-isopropylmalate). In Neisseria gonorrhoeae (strain ATCC 700825 / FA 1090), this protein is 2-isopropylmalate synthase.